Reading from the N-terminus, the 666-residue chain is UvrABC system protein B (666 aa).

The Helicase ATP-binding domain occupies 26-183 (DSFQKGAEKV…RKLLHIQYNR (158 aa)). Position 39–46 (39–46 (GVTGSGKT)) interacts with ATP. The short motif at 92-115 (YYDYYQPEAYVPSSDTFIEKDSSI) is the Beta-hairpin element. Residues 429–591 (QIEDLLVEIR…ITPLTIRKEV (163 aa)) enclose the Helicase C-terminal domain. Positions 625–660 (EVLKDKLREEMMKAAKELDFERAAILRDKMLSIQIN) constitute a UVR domain.

It belongs to the UvrB family. As to quaternary structure, forms a heterotetramer with UvrA during the search for lesions. Interacts with UvrC in an incision complex.

It localises to the cytoplasm. Functionally, the UvrABC repair system catalyzes the recognition and processing of DNA lesions. A damage recognition complex composed of 2 UvrA and 2 UvrB subunits scans DNA for abnormalities. Upon binding of the UvrA(2)B(2) complex to a putative damaged site, the DNA wraps around one UvrB monomer. DNA wrap is dependent on ATP binding by UvrB and probably causes local melting of the DNA helix, facilitating insertion of UvrB beta-hairpin between the DNA strands. Then UvrB probes one DNA strand for the presence of a lesion. If a lesion is found the UvrA subunits dissociate and the UvrB-DNA preincision complex is formed. This complex is subsequently bound by UvrC and the second UvrB is released. If no lesion is found, the DNA wraps around the other UvrB subunit that will check the other stand for damage. In Leptospira borgpetersenii serovar Hardjo-bovis (strain JB197), this protein is UvrABC system protein B.